Reading from the N-terminus, the 326-residue chain is Aquaporin-4 (326 aa).

The Cytoplasmic segment spans residues 1 to 39; sequence MSDGAGAAARRWGKCGGRSCSRESIMVAFKGVWTQAFWK. S-palmitoyl cysteine attachment occurs at residues C15 and C20. The chain crosses the membrane as a helical span at residues 40-60; that stretch reads AVTAEFLAMLIFVLLSVGSTI. Over 61–72 the chain is Extracellular; it reads NWGGSENPLPVD. A helical membrane pass occupies residues 73-92; sequence MVLISLCFGLSIATMVQCFG. At 93 to 96 the chain is on the cytoplasmic side; that stretch reads HISG. Positions 97 to 104 form an intramembrane region, discontinuously helical; sequence GHINPAVT. The short motif at 100–102 is the NPA 1 element; it reads NPA. Residues 105–118 are Cytoplasmic-facing; the sequence is VAMVCTRKISIAKS. At S114 the chain carries Phosphoserine; by PKG. A helical transmembrane segment spans residues 119–139; it reads VFYITAQCLGAIIGAGILYLV. At 140–158 the chain is on the extracellular side; the sequence is TPPNVVGGLGVTTVHGNLT. The N-linked (GlcNAc...) asparagine glycan is linked to N156. A helical transmembrane segment spans residues 159-179; it reads AGHGLLVELIITFQLVFTIFA. The Cytoplasmic segment spans residues 180–187; the sequence is SCDSKRTD. S183 bears the Phosphoserine; by PKC mark. Residues 188-208 traverse the membrane as a helical segment; sequence VTGSIALAIGFSVAIGHLFAI. N209 is a glycosylation site (N-linked (GlcNAc...) asparagine). Over 209–211 the chain is Extracellular; that stretch reads NYT. Residues 212–225 constitute an intramembrane region (discontinuously helical); sequence GASMNPARSFGPAV. The NPA 2 signature appears at 216-218; sequence NPA. The Extracellular portion of the chain corresponds to 226-234; it reads IMGNWENHW. Residues 235 to 255 traverse the membrane as a helical segment; the sequence is IYWVGPIIGAVLAGALYEYVF. Residues 256-326 lie on the Cytoplasmic side of the membrane; that stretch reads CPDVELKRRL…DSAGEVLSSV (71 aa). Residues S279 and S288 each carry the phosphoserine modification. T292 carries the phosphothreonine modification. The residue at position 324 (S324) is a Phosphoserine.

Belongs to the MIP/aquaporin (TC 1.A.8) family. Homotetramer. The tetramers can form oligomeric arrays in membranes. The size of the oligomers differs between tissues and is smaller in skeletal muscle than in brain. Interaction between AQP4 oligomeric arrays in close-by cells can contribute to cell-cell adhesion. Part of a complex containing MLC1, TRPV4, HEPACAM and ATP1B1. Post-translationally, phosphorylation by PKC at Ser-183 reduces conductance by 50%. Phosphorylation by PKG at Ser-114 in response to glutamate increases conductance by 40%. Isoform Long: Palmitoylated on its N-terminal region.

Its subcellular location is the cell membrane. The protein localises to the basolateral cell membrane. It localises to the endosome membrane. It is found in the sarcolemma. The protein resides in the cell projection. The catalysed reaction is H2O(in) = H2O(out). Forms a water-specific channel. Plays an important role in brain water homeostasis and in glymphatic solute transport. Required for a normal rate of water exchange across the blood brain interface. Required for normal levels of cerebrospinal fluid influx into the brain cortex and parenchyma along paravascular spaces that surround penetrating arteries, and for normal drainage of interstitial fluid along paravenous drainage pathways. Thereby, it is required for normal clearance of solutes from the brain interstitial fluid, including soluble beta-amyloid peptides derived from APP. Plays a redundant role in urinary water homeostasis and urinary concentrating ability. This Notomys alexis (Spinifex hopping mouse) protein is Aquaporin-4 (AQP4).